Consider the following 161-residue polypeptide: MIIEKILGNLHELPASEAGAFAGLHQEKVVLPSAQLVKRIQRVTTDHGKELGIRLPAGSGDLRDGDILHVAETNMIVISVLPTDVLVVAPRSIHEMGVVAHSLGNRHLQAQFFDAGSEYAADVMVCQYDHTVEDYLKHVGVPYERQERVMPVPFRHAEHSH.

This sequence belongs to the UreE family.

It is found in the cytoplasm. Functionally, involved in urease metallocenter assembly. Binds nickel. Probably functions as a nickel donor during metallocenter assembly. The polypeptide is Urease accessory protein UreE (Arthrobacter sp. (strain FB24)).